The chain runs to 432 residues: Adenylosuccinate synthetase (432 aa).

Residues 13 to 19 and 41 to 43 each bind GTP; these read GDEGKGK and GHT. Asp14 serves as the catalytic Proton acceptor. Mg(2+)-binding residues include Asp14 and Gly41. IMP contacts are provided by residues 14–17, 39–42, Thr130, Arg144, Gln225, Thr240, and Arg304; these read DEGK and NAGH. The active-site Proton donor is His42. 300-306 is a binding site for substrate; that stretch reads ATTGRSR. Residues Arg306, 332 to 334, and 415 to 417 contribute to the GTP site; these read KLD and STG.

Belongs to the adenylosuccinate synthetase family. In terms of assembly, homodimer. It depends on Mg(2+) as a cofactor.

It localises to the cytoplasm. It carries out the reaction IMP + L-aspartate + GTP = N(6)-(1,2-dicarboxyethyl)-AMP + GDP + phosphate + 2 H(+). Its pathway is purine metabolism; AMP biosynthesis via de novo pathway; AMP from IMP: step 1/2. In terms of biological role, plays an important role in the de novo pathway of purine nucleotide biosynthesis. Catalyzes the first committed step in the biosynthesis of AMP from IMP. This chain is Adenylosuccinate synthetase, found in Yersinia pestis bv. Antiqua (strain Antiqua).